A 2327-amino-acid polypeptide reads, in one-letter code: Genome polyprotein (2327 aa).

Residues 1 to 201 enclose the Peptidase C28 domain; sequence MNTTDCFIAV…WKASVQRKLK (201 aa). At 1-1475 the chain is on the cytoplasmic side; that stretch reads MNTTDCFIAV…SFVKRAFKRL (1475 aa). Active-site for leader protease activity residues include Cys-51, His-148, and Asp-163. Disordered stretches follow at residues 196 to 218 and 238 to 265; these read VQRK…QSGN and QLGD…NTQN. A lipid anchor (N-myristoyl glycine; by host) is attached at Gly-202. 2 stretches are compositionally biased toward polar residues: residues 204-218 and 238-251; these read GQSS…QSGN and QLGD…SNEG. The span at 252-265 shows a compositional bias: low complexity; sequence STDTTSTHTTNTQN. The tract at residues 787 to 795 is antigenic epitope; it reads ALLRAATYY. The short motif at 864 to 866 is the Cell attachment site element; it reads RGD. One can recognise an SF3 helicase domain in the interval 1184–1348; that stretch reads NVHIANLCKV…DGYKINNKLD (165 aa). Residue 1212–1219 participates in ATP binding; sequence GKSGQGKS. An intramembrane segment occupies 1476–1496; the sequence is KENFEIVALCLTLLANIVIMI. The Cytoplasmic portion of the chain corresponds to 1497–2327; it reads RETHKRQKMV…RWVNAVCGDA (831 aa). The disordered stretch occupies residues 1524 to 1584; that stretch reads QTLDEAEKNP…PYAGPLERQR (61 aa). Basic and acidic residues predominate over residues 1544–1558; the sequence is FRERTLPGQKARDDV. O-(5'-phospho-RNA)-tyrosine occurs at positions 1576, 1599, and 1623. The 197-residue stretch at 1647-1843 folds into the Peptidase C3 domain; that stretch reads APPTDLQKMV…YCSCVSRSML (197 aa). Residue His-1690 is the For protease 3C activity; Proton donor/acceptor of the active site. Active-site for protease 3C activity residues include Asp-1728 and Cys-1807. Positions 1873 to 1881 match the Nuclear localization signal motif; sequence MRKTKLAPT. The RdRp catalytic domain occupies 2091 to 2209; that stretch reads RNVWDVDYSA…ASDYDLDFEA (119 aa). Asp-2195 acts as the For RdRp activity in catalysis.

It belongs to the picornaviruses polyprotein family. Interacts with host ISG15. As to quaternary structure, interacts (via R-G-D motif) with host ITGAV/ITGB6. Interacts with host MAVS; this interaction inhibits binding of host TRAF3 to MAVS, thereby suppressing interferon-mediated responses. In terms of assembly, forms homooligomers. Homohexamer. Interacts with host VIM. Interacts with host BECN1. As to quaternary structure, interacts with host DCTN3. In terms of assembly, interacts with RNA-dependent RNA polymerase; this interaction allows 3B-1 to binds 2 polymerases and act as a primer. It also allows the recruitment of the RNA-dependent RNA polymerase to host membranes. Interacts with RNA-dependent RNA polymerase; this interaction allows 3B-2 to act as a primer. As to quaternary structure, interacts with RNA-dependent RNA polymerase; this interaction allows 3B-3 to act as a primer. In terms of assembly, interacts with 3B-1; this interaction allows 3B-1 to binds 2 polymerases and act as a primer. It also allows the recruitment of the RNA-dependent RNA polymerase to host membranes. Interacts with 3B-2; this interaction allows 3B-2 to act as a primer. Interacts with 3B-3; this interaction allows 3B-3 to act as a primer. Removes six residues from its own C-terminus, generating sLb(pro). Post-translationally, specific enzymatic cleavages in vivo by the viral proteases yield a variety of precursors and mature proteins. The polyprotein seems to be cotranslationally cleaved at the 2A/2B junction by a ribosomal skip from one codon to the next without formation of a peptide bond. This process would release the L-P1-2A peptide from the translational complex. In terms of processing, during virion maturation, immature virions are rendered infectious following cleavage of VP0 into VP4 and VP2. This maturation seems to be an autocatalytic event triggered by the presence of RNA in the capsid and is followed by a conformational change of the particle. Myristoylation is required during RNA encapsidation and formation of the mature virus particle. Post-translationally, uridylylated by the polymerase and covalently linked to the 5'-end of genomic RNA. These uridylylated forms act as a nucleotide-peptide primer for the polymerase.

It is found in the host nucleus. The protein localises to the host cytoplasm. It localises to the virion. Its subcellular location is the host endoplasmic reticulum membrane. The protein resides in the host cytoplasmic vesicle membrane. The enzyme catalyses Autocatalytically cleaves itself from the polyprotein of the foot-and-mouth disease virus by hydrolysis of a Lys-|-Gly bond, but then cleaves host cell initiation factor eIF-4G at bonds -Gly-|-Arg- and -Lys-|-Arg-.. It carries out the reaction a ribonucleoside 5'-triphosphate + H2O = a ribonucleoside 5'-diphosphate + phosphate + H(+). It catalyses the reaction RNA(n) + a ribonucleoside 5'-triphosphate = RNA(n+1) + diphosphate. The catalysed reaction is Selective cleavage of Gln-|-Gly bond in the poliovirus polyprotein. In other picornavirus reactions Glu may be substituted for Gln, and Ser or Thr for Gly.. Functionally, autocatalytically cleaves itself from the polyprotein at the L/VP0 junction. Also cleaves the host translation initiation factors EIF4G1 and EIF4G3, in order to shut off the capped cellular mRNA transcription. Plays a role in counteracting host innate antiviral response using diverse mechanisms. Possesses a deubiquitinase activity acting on both 'Lys-48' and 'Lys-63'-linked polyubiquitin chains. In turn, inhibits the ubiquitination and subsequent activation of key signaling molecules of type I IFN response such as host RIGI, TBK1, TRAF3 and TRAF6. Inhibits host NF-kappa-B activity by inducing a decrease in RELA mRNA levels. Cleaves a peptide bond in the C-terminus of host ISG15, resulting in the damaging of this modifier that can no longer be attached to target proteins. Also cleaves host G3BP1 and G3BP2 in order to inhibit cytoplasmic stress granules assembly. Its function is as follows. Lies on the inner surface of the capsid shell. After binding to the host receptor, the capsid undergoes conformational changes. Capsid protein VP4 is released, capsid protein VP1 N-terminus is externalized, and together, they shape a pore in the host membrane through which the viral genome is translocated into the host cell cytoplasm. After genome has been released, the channel shrinks. In terms of biological role, forms an icosahedral capsid of pseudo T=3 symmetry with capsid proteins VP1 and VP3. The capsid is composed of 60 copies of each capsid protein organized in the form of twelve pentamers and encloses the viral positive strand RNA genome. Upon acidifcation in the endosome, dissociates into pentamers. Forms an icosahedral capsid of pseudo T=3 symmetry with capsid proteins VP0 and VP3. The capsid is composed of 60 copies of each capsid protein organized in the form of twelve pentamers and encloses the viral positive strand RNA genome. Upon acidifcation in the endosome, dissociates into pentamers. Functionally, forms an icosahedral capsid of pseudo T=3 symmetry with capsid proteins VP2 and VP3. The capsid is composed of 60 copies of each capsid protein organized in the form of twelve pentamers and encloses the viral positive strand RNA genome. Mediates cell entry by attachment to an integrin receptor, usually host ITGAV/ITGB6. In addition, targets host MAVS to suppress type I IFN pathway. Upon acidifcation in the endosome, dissociates into pentamers. Its function is as follows. Mediates self-processing of the polyprotein by a translational effect termed 'ribosome skipping'. Mechanistically, 2A-mediated cleavage occurs between the C-terminal glycine and the proline of the downstream protein 2B. In the case of foot-and-mouth disease virus, the 2A oligopeptide is post-translationally 'trimmed' from the C-terminus of the upstream protein 1D by 3C proteinase. In terms of biological role, plays an essential role in the virus replication cycle by acting as a viroporin. Creates a pore in the host endoplasmic reticulum and as a consequence releases Ca2+ in the cytoplasm of infected cell. In turn, high levels of cytoplasmic calcium may trigger membrane trafficking and transport of viral ER-associated proteins to viroplasms, sites of viral genome replication. Associates with and induces structural rearrangements of intracellular membranes. Triggers host autophagy by interacting with host BECN1 and thereby promotes viral replication. Participates in viral replication and interacts with host DHX9. Displays RNA-binding, nucleotide binding and NTPase activities. May play a role in virion morphogenesis and viral RNA encapsidation by interacting with the capsid protein VP3. Functionally, plays important roles in virus replication, virulence and host range. Cooperates with host DDX56 to inhibit IRF3 nuclear translocation and subsequent type I interferon production. Its function is as follows. Covalently linked to the 5'-end of both the positive-strand and negative-strand genomic RNAs. Acts as a genome-linked replication primer. In terms of biological role, cysteine protease that generates mature viral proteins from the precursor polyprotein. In addition to its proteolytic activity, binds to viral RNA and thus influences viral genome replication. RNA and substrate bind cooperatively to the protease. RNA-directed RNA polymerase 3D-POL replicates genomic and antigenomic RNA by recognizing replications specific signals. Covalently attaches UMP to a tyrosine of VPg, which is used to prime RNA synthesis. The positive stranded RNA genome is first replicated at virus induced membranous vesicles, creating a dsRNA genomic replication form. This dsRNA is then used as template to synthesize positive stranded RNA genomes. ss(+)RNA genomes are either translated, replicated or encapsidated. In Bos taurus (Bovine), this protein is Genome polyprotein.